The chain runs to 2137 residues: Pecanex-like protein 2 (2137 aa).

2 helical membrane-spanning segments follow: residues 34–54 (CHLY…LAFP) and 57–77 (AIIV…IKLV). Disordered stretches follow at residues 92–163 (QQKP…LELS), 225–251 (NGKG…VDKG), 402–530 (EKTS…HARV), and 545–572 (SAEI…QMPN). Basic and acidic residues predominate over residues 96 to 114 (SRKEEKPNKDKEAKGEHIT). Positions 116–125 (HRNPSNNRQI) are enriched in polar residues. N-linked (GlcNAc...) asparagine glycosylation is present at N136. Polar residues predominate over residues 146 to 156 (SRGQSITSHHS). An N-linked (GlcNAc...) asparagine glycan is attached at N449. Residues 479 to 490 (IKDHSSSSREPW) show a composition bias toward basic and acidic residues. Over residues 510–520 (GQTNLDPSSCK) the composition is skewed to polar residues. 5 N-linked (GlcNAc...) asparagine glycosylation sites follow: N550, N572, N587, N598, and N613. Polar residues predominate over residues 593–602 (ASSQLNGSAE). The tract at residues 593–612 (ASSQLNGSAEQNEESGLLRD) is disordered. Disordered stretches follow at residues 621-655 (EILE…CTQP) and 740-763 (AREM…SGDP). Positions 630 to 655 (GHSSKQGKPDLQSQDHTSTGPACTQP) are enriched in polar residues. A compositionally biased stretch (low complexity) spans 746-760 (SSSSTTTSESQDPSS). Helical transmembrane passes span 844 to 864 (LAIL…SQGF), 868 to 888 (MWVL…LKSV), 901 to 921 (QIIT…ILLL), 952 to 972 (YLIV…FPQI), 983 to 1003 (IDML…VYSV), 1029 to 1049 (HIPA…YHLS), 1099 to 1119 (LIVC…TVFL), 1124 to 1144 (FLSI…HYVL), 1193 to 1213 (YILY…LISN), 1237 to 1257 (SFCN…FFHF), 1265 to 1285 (SFLL…DLLH), 1302 to 1322 (GSSF…MLFF), and 1324 to 1344 (TIAT…VIFI). N-linked (GlcNAc...) asparagine glycans are attached at residues N1412, N1553, and N1818. Positions 1876-1958 (RQHSGGNIED…RPPMLSSSGP (83 aa)) are disordered. 3 stretches are compositionally biased toward polar residues: residues 1901-1910 (SGGSQESSAE), 1920-1929 (GVSSCEGTQR), and 1937-1958 (SQSV…SSGP). N-linked (GlcNAc...) asparagine glycosylation occurs at N2054.

It belongs to the pecanex family.

It is found in the membrane. In terms of biological role, may play a role in tumorigenesis of colorectal carcinomas with high microsatellite instability (MSI-H). In Homo sapiens (Human), this protein is Pecanex-like protein 2.